The primary structure comprises 126 residues: Small ribosomal subunit protein bS6 (126 aa).

It belongs to the bacterial ribosomal protein bS6 family.

Functionally, binds together with bS18 to 16S ribosomal RNA. The chain is Small ribosomal subunit protein bS6 from Bordetella bronchiseptica (strain ATCC BAA-588 / NCTC 13252 / RB50) (Alcaligenes bronchisepticus).